A 1772-amino-acid chain; its full sequence is Putative stereocilin-like protein (1772 aa).

Residues 1-25 (MALSLWPLLLLLLLLLLLSFAVTLA) form the signal peptide. N-linked (GlcNAc...) asparagine glycans are attached at residues Asn65, Asn427, Asn476, and Asn565.

The protein belongs to the stereocilin family.

It is found in the secreted. This chain is Putative stereocilin-like protein (STRCP1), found in Homo sapiens (Human).